Here is a 220-residue protein sequence, read N- to C-terminus: Thiopurine S-methyltransferase (220 aa).

The S-adenosyl-L-methionine site is built by W10, L45, E66, and R123.

The protein belongs to the class I-like SAM-binding methyltransferase superfamily. TPMT family.

The protein resides in the cytoplasm. The catalysed reaction is S-adenosyl-L-methionine + a thiopurine = S-adenosyl-L-homocysteine + a thiopurine S-methylether.. The sequence is that of Thiopurine S-methyltransferase from Pseudomonas syringae pv. tomato (strain ATCC BAA-871 / DC3000).